The sequence spans 100 residues: Urease subunit gamma (100 aa).

It belongs to the urease gamma subunit family. As to quaternary structure, heterotrimer of UreA (gamma), UreB (beta) and UreC (alpha) subunits. Three heterotrimers associate to form the active enzyme.

It localises to the cytoplasm. The enzyme catalyses urea + 2 H2O + H(+) = hydrogencarbonate + 2 NH4(+). The protein operates within nitrogen metabolism; urea degradation; CO(2) and NH(3) from urea (urease route): step 1/1. The chain is Urease subunit gamma from Streptomyces griseus subsp. griseus (strain JCM 4626 / CBS 651.72 / NBRC 13350 / KCC S-0626 / ISP 5235).